We begin with the raw amino-acid sequence, 314 residues long: CBASS oligonucleotide cyclase CdnC (314 aa).

Lys-60 lines the ATP pocket. Asp-73 and Asp-75 together coordinate Mg(2+). ATP is bound by residues Asp-75, Lys-186, 197–199, and Asn-263; that span reads KSF.

It belongs to the CD-NTase family. C01 subfamily. In terms of assembly, forms complexes with Cap7 with 1:1 and 2:2 stoichimetry, and a 1:1:6 CdnC:Cap7:Cap6 complex. It depends on Mg(2+) as a cofactor.

Cyclic nucleotide synthase (second messenger synthase) of a CBASS antivirus system. CBASS (cyclic oligonucleotide-based antiphage signaling system) provides immunity against bacteriophage. The CD-NTase protein synthesizes cyclic nucleotides in response to infection; these serve as specific second messenger signals. The signals activate a diverse range of effectors, leading to bacterial cell death and thus abortive phage infection. A type III CBASS system. Expression of this CBASS system (Cap18-Cap6-Cap7-CdnC-CapW-Cap17) in a susceptible E.coli (strain MG1655) confers resistance to bacteriophage P1. Probable cyclic nucleotide synthase that upon activation catalyzes the synthesis of a cyclic nucleotide. A cyclase activity for this enzyme was not identified in. The protein is CBASS oligonucleotide cyclase CdnC of Escherichia coli (strain KTE188).